Reading from the N-terminus, the 210-residue chain is Prohead protease (210 aa).

A propeptide spanning residues 1-23 (MTQAAIDYNKLKSAPVHLDAYIK) is cleaved from the precursor. Active-site residues include His76, Ser122, and Glu148. The propeptide occupies 167–210 (SMNGHDYTEWRKSFTAISSKAVPAQERNLSELEKLAIALGYVKE).

Belongs to the HK97 prohead protease protein family. Post-translationally, cleaves itself autocatalytically to yield the mature form of the protease.

Its subcellular location is the virion. Serine protease involved in capsid assembly and maturation. Cleaves the major capsid protein, the decoration protein, the portal protein to yield mature procapsids competent for DNA packaging. Acts as a trigger for assembly of the capsid protein. This is Prohead protease from Escherichia coli (Enterobacteria phage T5).